The chain runs to 127 residues: Small ribosomal subunit protein uS11 (127 aa).

This sequence belongs to the universal ribosomal protein uS11 family. Part of the 30S ribosomal subunit. Interacts with proteins S7 and S18. Binds to IF-3.

Its function is as follows. Located on the platform of the 30S subunit, it bridges several disparate RNA helices of the 16S rRNA. Forms part of the Shine-Dalgarno cleft in the 70S ribosome. In Streptococcus mutans serotype c (strain ATCC 700610 / UA159), this protein is Small ribosomal subunit protein uS11.